The following is a 468-amino-acid chain: 6-phospho-beta-galactosidase (468 aa).

The D-galactose 6-phosphate site is built by Gln19, His116, Asn159, Glu160, and Asn297. Catalysis depends on Glu160, which acts as the Proton donor. The active-site Nucleophile is Glu375. D-galactose 6-phosphate-binding residues include Ser428, Trp429, Lys435, and Tyr437.

The protein belongs to the glycosyl hydrolase 1 family.

The enzyme catalyses a 6-phospho-beta-D-galactoside + H2O = D-galactose 6-phosphate + an alcohol. It participates in carbohydrate metabolism; lactose degradation; D-galactose 6-phosphate and beta-D-glucose from lactose 6-phosphate: step 1/1. The sequence is that of 6-phospho-beta-galactosidase from Streptococcus pneumoniae (strain JJA).